The chain runs to 157 residues: Aspartate carbamoyltransferase regulatory chain (157 aa).

Cys108, Cys113, Cys138, and Cys141 together coordinate Zn(2+).

Belongs to the PyrI family. Contains catalytic and regulatory chains. Requires Zn(2+) as cofactor.

In terms of biological role, involved in allosteric regulation of aspartate carbamoyltransferase. This Ignicoccus hospitalis (strain KIN4/I / DSM 18386 / JCM 14125) protein is Aspartate carbamoyltransferase regulatory chain.